The following is an 88-amino-acid chain: Small ribosomal subunit protein uS15 (88 aa).

This sequence belongs to the universal ribosomal protein uS15 family. Part of the 30S ribosomal subunit. Forms a bridge to the 50S subunit in the 70S ribosome, contacting the 23S rRNA.

Functionally, one of the primary rRNA binding proteins, it binds directly to 16S rRNA where it helps nucleate assembly of the platform of the 30S subunit by binding and bridging several RNA helices of the 16S rRNA. Forms an intersubunit bridge (bridge B4) with the 23S rRNA of the 50S subunit in the ribosome. In Francisella tularensis subsp. tularensis (strain FSC 198), this protein is Small ribosomal subunit protein uS15.